A 438-amino-acid chain; its full sequence is uncharacterized protein (438 aa).

Zn(2+) is bound at residue His59. The active-site Proton acceptor is Glu62. His63 and Glu139 together coordinate Zn(2+).

Belongs to the peptidase M16 family. Zn(2+) is required as a cofactor.

This is an uncharacterized protein from Mycobacterium tuberculosis (strain CDC 1551 / Oshkosh).